Here is a 302-residue protein sequence, read N- to C-terminus: Ribonucleoside-diphosphate reductase small subunit (302 aa).

The Fe cation site is built by Glu61, Glu91, and His94. The active site involves Tyr98. The chain crosses the membrane as a helical span at residues 147-167; sequence ILVFLLIEGIFFISSFYSIAL. The Fe cation site is built by Glu154, Glu188, and His191.

The protein belongs to the ribonucleoside diphosphate reductase small chain family. As to quaternary structure, heterotetramer composed of a homodimer of the large subunit (R1) and a homodimer of the small subunit (R2). Larger multisubunit protein complex are also active, composed of (R1)n(R2)n. Fe cation is required as a cofactor.

The protein localises to the host membrane. It carries out the reaction a 2'-deoxyribonucleoside 5'-diphosphate + [thioredoxin]-disulfide + H2O = a ribonucleoside 5'-diphosphate + [thioredoxin]-dithiol. Ribonucleoside-diphosphate reductase holoenzyme provides the precursors necessary for viral DNA synthesis. Allows virus growth in non-dividing cells, as well as reactivation from latency in infected hosts. Catalyzes the biosynthesis of deoxyribonucleotides from the corresponding ribonucleotides. The chain is Ribonucleoside-diphosphate reductase small subunit from Homo sapiens (Human).